The following is a 520-amino-acid chain: Type I restriction enzyme EcoprrI methylase subunit (520 aa).

S-adenosyl-L-methionine is bound by residues 198–203 (EFFTPQ), 230–232 (SGS), and glutamate 254.

Belongs to the N(4)/N(6)-methyltransferase family. In terms of assembly, the type I restriction/modification system is composed of three polypeptides R, M and S; the restriction enzyme has stoichiometry R(2)M(2)S(1) while the methyltransferase is M(2)S(1).

The catalysed reaction is a 2'-deoxyadenosine in DNA + S-adenosyl-L-methionine = an N(6)-methyl-2'-deoxyadenosine in DNA + S-adenosyl-L-homocysteine + H(+). Functionally, the subtype gamma methyltransferase (M) subunit of a type I restriction enzyme. The M and S subunits together form a methyltransferase (MTase) that methylates two adenine residues of the sequence 5'-CCAN(7)ATGC-3'. In the presence of the R subunit the complex can also act as an endonuclease, binding to the same target sequence but cutting the DNA some distance from this site. Whether the DNA is cut or modified depends on the methylation state of the target sequence. When the target site is unmodified, the DNA is cut. When the target site is hemimethylated, the complex acts as a maintenance MTase modifying the DNA so that both strands become methylated. After locating a non-methylated recognition site, the enzyme complex serves as a molecular motor that translocates DNA in an ATP-dependent manner until a collision occurs that triggers cleavage. The protein is Type I restriction enzyme EcoprrI methylase subunit of Escherichia coli.